The following is a 278-amino-acid chain: Orotidine 5'-phosphate decarboxylase (278 aa).

The active-site Proton donor is the lysine 95.

The protein belongs to the OMP decarboxylase family. Type 2 subfamily.

It carries out the reaction orotidine 5'-phosphate + H(+) = UMP + CO2. It participates in pyrimidine metabolism; UMP biosynthesis via de novo pathway; UMP from orotate: step 2/2. The chain is Orotidine 5'-phosphate decarboxylase from Mycobacterium ulcerans (strain Agy99).